We begin with the raw amino-acid sequence, 345 residues long: D-fructose 1,6-bisphosphatase class 2/sedoheptulose 1,7-bisphosphatase (345 aa).

Mn(2+) contacts are provided by Asp33, Glu57, Asp97, and Glu100. Substrate contacts are provided by residues 100-102 (EGT), Tyr131, 176-178 (RPR), and 198-200 (DGD). Residue Glu225 participates in Mn(2+) binding.

It belongs to the FBPase class 2 family. Homotetramer. Mn(2+) is required as a cofactor.

It catalyses the reaction beta-D-fructose 1,6-bisphosphate + H2O = beta-D-fructose 6-phosphate + phosphate. It carries out the reaction D-sedoheptulose 1,7-bisphosphate + H2O = D-sedoheptulose 7-phosphate + phosphate. The protein operates within carbohydrate biosynthesis; Calvin cycle. Catalyzes the hydrolysis of fructose 1,6-bisphosphate (Fru 1,6-P2) and sedoheptulose 1,7-bisphosphate (Sed 1,7-P2) to fructose 6-phosphate and sedoheptulose 7-phosphate, respectively. The chain is D-fructose 1,6-bisphosphatase class 2/sedoheptulose 1,7-bisphosphatase from Trichodesmium erythraeum (strain IMS101).